We begin with the raw amino-acid sequence, 55 residues long: Neurotoxin BmP08 (55 aa).

Residues 1–23 form the signal peptide; it reads MKIFFAVLVILVLFSMLIWTAYG. 3 disulfide bridges follow: cysteine 30/cysteine 45, cysteine 36/cysteine 50, and cysteine 39/cysteine 53.

Expressed by the venom gland.

It localises to the secreted. The sequence is that of Neurotoxin BmP08 from Olivierus martensii (Manchurian scorpion).